The sequence spans 118 residues: Large ribosomal subunit protein uL18 (118 aa).

This sequence belongs to the universal ribosomal protein uL18 family. Part of the 50S ribosomal subunit; part of the 5S rRNA/L5/L18/L25 subcomplex. Contacts the 5S and 23S rRNAs.

Its function is as follows. This is one of the proteins that bind and probably mediate the attachment of the 5S RNA into the large ribosomal subunit, where it forms part of the central protuberance. The protein is Large ribosomal subunit protein uL18 of Ligilactobacillus salivarius (strain UCC118) (Lactobacillus salivarius).